Reading from the N-terminus, the 112-residue chain is Cuticle protein AM1239 (112 aa).

In terms of domain architecture, Chitin-binding type R&amp;R spans 16–85 (DGNFNYRFET…FIPTDHPLPA (70 aa)). A glycan (O-linked (HexNAc) threonine) is linked at threonine 79.

As to expression, arthrodial membrane.

The polypeptide is Cuticle protein AM1239 (Cancer pagurus (Rock crab)).